A 173-amino-acid polypeptide reads, in one-letter code: MTFDAFTKVVAQADARGEFLSDAQLDALSRLVAEGNKRIDTVNRITGNASSIVANAARALFAEQPSLIAPGGNVYTNRRMAACLRDMEIILRYVTYAVFTGDASILDDRCLNGLRETYLALGVPGASVAEGVRKMKDAAVAIVSDRNGITQGDCSAIISELGSYFDKAAAAVA.

Asn73 carries the N4-methylasparagine modification. The (2R,3E)-phycocyanobilin site is built by Cys83 and Cys154.

This sequence belongs to the phycobiliprotein family. In terms of assembly, heterodimer of an alpha and a beta subunit, which further assembles into trimers and the trimers into hexamers. Post-translationally, contains two covalently linked bilin chromophores.

The protein localises to the cellular thylakoid membrane. Its function is as follows. Light-harvesting photosynthetic bile pigment-protein from the phycobiliprotein complex (phycobilisome, PBS). Phycocyanin is the major phycobiliprotein in the PBS rod. This is C-phycocyanin-2 beta subunit (cpcB2) from Synechococcus sp. (strain ATCC 27144 / PCC 6301 / SAUG 1402/1) (Anacystis nidulans).